The chain runs to 312 residues: Porphobilinogen deaminase (312 aa).

An S-(dipyrrolylmethanemethyl)cysteine modification is found at Cys-241.

This sequence belongs to the HMBS family. In terms of assembly, monomer. Dipyrromethane serves as cofactor.

The catalysed reaction is 4 porphobilinogen + H2O = hydroxymethylbilane + 4 NH4(+). It functions in the pathway porphyrin-containing compound metabolism; protoporphyrin-IX biosynthesis; coproporphyrinogen-III from 5-aminolevulinate: step 2/4. Tetrapolymerization of the monopyrrole PBG into the hydroxymethylbilane pre-uroporphyrinogen in several discrete steps. The chain is Porphobilinogen deaminase from Aliarcobacter butzleri (strain RM4018) (Arcobacter butzleri).